We begin with the raw amino-acid sequence, 439 residues long: Transcription factor pydF (439 aa).

Residues 1–18 show a composition bias toward basic and acidic residues; it reads MGRPQRADKQRRETDGPQ. Disordered regions lie at residues 1-53, 143-177, and 239-262; these read MGRP…GYAR, HVEK…QAVE, and AFRD…MQQH. Positions 20–35 are enriched in polar residues; sequence SRPSLTQAQKNSTTIR. Positions 143–153 are enriched in basic and acidic residues; the sequence is HVEKATAERPG. A compositionally biased stretch (low complexity) spans 157 to 172; sequence SSSPSSSLLRTSSSPS. Residues 243 to 260 are compositionally biased toward polar residues; the sequence is GQNNGTSRPNTAASQNMQ.

Its subcellular location is the nucleus. Functionally, transcription factor; part of the gene cluster that mediates the biosynthesis of pyrrocidines, fungal natural products containing a macrocyclic para-cyclophane connected to a decahydrofluorene ring system that show potent antibiotic activities toward Gram-negative bacteria. The chain is Transcription factor pydF from Acremonium sp.